A 476-amino-acid chain; its full sequence is Membrane-bound lytic murein transglycosylase F (476 aa).

The N-terminal stretch at 1 to 16 (MIKTLFIILLCGILSA) is a signal peptide. Residues 17 to 259 (CQPVDIQDVD…HLNEKYFGHV (243 aa)) form a non-LT domain region. An LT domain region spans residues 260-476 (KRFDYVDTRA…VPAKSHVSAQ (217 aa)). Residue glutamate 304 is part of the active site.

In the N-terminal section; belongs to the bacterial solute-binding protein 3 family. This sequence in the C-terminal section; belongs to the transglycosylase Slt family.

The protein localises to the cell outer membrane. It carries out the reaction Exolytic cleavage of the (1-&gt;4)-beta-glycosidic linkage between N-acetylmuramic acid (MurNAc) and N-acetylglucosamine (GlcNAc) residues in peptidoglycan, from either the reducing or the non-reducing ends of the peptidoglycan chains, with concomitant formation of a 1,6-anhydrobond in the MurNAc residue.. Murein-degrading enzyme that degrades murein glycan strands and insoluble, high-molecular weight murein sacculi, with the concomitant formation of a 1,6-anhydromuramoyl product. Lytic transglycosylases (LTs) play an integral role in the metabolism of the peptidoglycan (PG) sacculus. Their lytic action creates space within the PG sacculus to allow for its expansion as well as for the insertion of various structures such as secretion systems and flagella. The sequence is that of Membrane-bound lytic murein transglycosylase F from Shewanella frigidimarina (strain NCIMB 400).